A 113-amino-acid chain; its full sequence is UPF0482 protein YnfB (113 aa).

An N-terminal signal peptide occupies residues 1–28; sequence MNNTLSKRLCLTAMLTLAAVVYTTSAFA.

This sequence belongs to the UPF0482 family.

In Salmonella agona (strain SL483), this protein is UPF0482 protein YnfB.